We begin with the raw amino-acid sequence, 105 residues long: Large ribosomal subunit protein uL24 (105 aa).

It belongs to the universal ribosomal protein uL24 family. In terms of assembly, part of the 50S ribosomal subunit.

Its function is as follows. One of two assembly initiator proteins, it binds directly to the 5'-end of the 23S rRNA, where it nucleates assembly of the 50S subunit. One of the proteins that surrounds the polypeptide exit tunnel on the outside of the subunit. The chain is Large ribosomal subunit protein uL24 from Mycobacterium sp. (strain JLS).